The following is a 370-amino-acid chain: DNA replication and repair protein RecF (370 aa).

30–37 (GQNGMGKT) is a binding site for ATP.

This sequence belongs to the RecF family.

It is found in the cytoplasm. Its function is as follows. The RecF protein is involved in DNA metabolism; it is required for DNA replication and normal SOS inducibility. RecF binds preferentially to single-stranded, linear DNA. It also seems to bind ATP. The polypeptide is DNA replication and repair protein RecF (Bacteroides fragilis (strain ATCC 25285 / DSM 2151 / CCUG 4856 / JCM 11019 / LMG 10263 / NCTC 9343 / Onslow / VPI 2553 / EN-2)).